Here is a 392-residue protein sequence, read N- to C-terminus: S-adenosylmethionine synthase (392 aa).

His-17 is a binding site for ATP. Asp-19 is a Mg(2+) binding site. Glu-45 contributes to the K(+) binding site. Residues Glu-58 and Gln-102 each coordinate L-methionine. The tract at residues 102-112 is flexible loop; sequence QSADIAQGVDA. Residues 169–171, 235–236, Asp-244, 250–251, Ala-267, and Lys-271 each bind ATP; these read DAK, KF, and RK. Asp-244 contacts L-methionine. Lys-275 serves as a coordination point for L-methionine.

The protein belongs to the AdoMet synthase family. In terms of assembly, homotetramer; dimer of dimers. The cofactor is Mg(2+). K(+) serves as cofactor.

The protein localises to the cytoplasm. It carries out the reaction L-methionine + ATP + H2O = S-adenosyl-L-methionine + phosphate + diphosphate. The protein operates within amino-acid biosynthesis; S-adenosyl-L-methionine biosynthesis; S-adenosyl-L-methionine from L-methionine: step 1/1. Functionally, catalyzes the formation of S-adenosylmethionine (AdoMet) from methionine and ATP. The overall synthetic reaction is composed of two sequential steps, AdoMet formation and the subsequent tripolyphosphate hydrolysis which occurs prior to release of AdoMet from the enzyme. This Methylobacterium radiotolerans (strain ATCC 27329 / DSM 1819 / JCM 2831 / NBRC 15690 / NCIMB 10815 / 0-1) protein is S-adenosylmethionine synthase.